The chain runs to 60 residues: Toxin S4C8 (60 aa).

Disulfide bonds link C3-C22, C17-C39, C41-C52, and C53-C58. Positions 41-48 (CPTAMWPY) are important for binding to L-type calcium channels.

This sequence belongs to the three-finger toxin family. Short-chain subfamily. L-type calcium blocker sub-subfamily. In terms of tissue distribution, expressed by the venom gland.

It localises to the secreted. Its function is as follows. This specific blocker of the L-type calcium channel (Cav1/CACNA1) is a smooth muscle relaxant and an inhibitor of cardiac contractions. This is Toxin S4C8 from Dendroaspis jamesoni kaimosae (Eastern Jameson's mamba).